Consider the following 293-residue polypeptide: Triosephosphate isomerase (293 aa).

A substrate-binding site is contributed by 25–27 (NWK). Histidine 117 serves as the catalytic Electrophile. Catalysis depends on glutamate 218, which acts as the Proton acceptor.

The protein belongs to the triosephosphate isomerase family. As to quaternary structure, homodimer.

The protein resides in the cytoplasm. The catalysed reaction is D-glyceraldehyde 3-phosphate = dihydroxyacetone phosphate. The protein operates within carbohydrate biosynthesis; gluconeogenesis. It functions in the pathway carbohydrate degradation; glycolysis; D-glyceraldehyde 3-phosphate from glycerone phosphate: step 1/1. Functionally, involved in the gluconeogenesis. Catalyzes stereospecifically the conversion of dihydroxyacetone phosphate (DHAP) to D-glyceraldehyde-3-phosphate (G3P). The sequence is that of Triosephosphate isomerase from Tropheryma whipplei (strain TW08/27) (Whipple's bacillus).